A 256-amino-acid chain; its full sequence is Catechol O-methyltransferase A (256 aa).

The signal sequence occupies residues 1–27 (MLWVVLAVVVVLASVLVLLRQSSGLLA). An N-linked (GlcNAc...) asparagine glycan is attached at Asn58. The S-adenosyl-L-methionine site is built by Val84, Ser114, Glu132, and Asp183. Asp183 contributes to the Mg(2+) binding site. Lys186 lines the substrate pocket. Residues Asp211 and Asn212 each coordinate Mg(2+). Asn212 and Glu241 together coordinate substrate.

The protein belongs to the class I-like SAM-binding methyltransferase superfamily. Cation-dependent O-methyltransferase family. It depends on Mg(2+) as a cofactor. As to expression, widely expressed. Has higher expression in females compared to males. Strongly expressed in liver and diencephalon. Expressed at lower levels in hindbrain, spinal cord, eye, telencephalon, spleen, gut, gill and muscle. Detected in ovary and testis. In eye, detected in all layers of the retina with highest expression in the inner nuclear layer. In gut, expressed in the lamina propria but has little or no expression in gut epithelium. In brain, has strongest expression near the midline of the telencephalon, in the periventricular gray zone of the optic tectum, in the preglomerular nucleus, and near the walls of the diencephalic ventricle.

Its subcellular location is the secreted. It carries out the reaction a catechol + S-adenosyl-L-methionine = a guaiacol + S-adenosyl-L-homocysteine + H(+). Its function is as follows. Catalyzes the O-methylation, and thereby the inactivation, of catecholamine neurotransmitters and catechol hormones. Shows highest activity towards catecholestrogens and dobutamine. Also has lower activity towards L-DOPA, dopamine and epinephrine. Active towards the xenobiotic compounds methyl-DOPA, carbidopa, isoproterenol, and apomorphine. This Danio rerio (Zebrafish) protein is Catechol O-methyltransferase A.